The chain runs to 322 residues: Hydrolase C26A3.11 (322 aa).

Positions 44 to 290 (FRIGLVQLAN…PSIVYADIDP (247 aa)) constitute a CN hydrolase domain. Catalysis depends on Glu-83, which acts as the Proton acceptor. Residue Lys-154 is the Proton donor of the active site. Cys-195 acts as the Nucleophile in catalysis.

This sequence belongs to the carbon-nitrogen hydrolase superfamily. NIT1/NIT2 family.

In Schizosaccharomyces pombe (strain 972 / ATCC 24843) (Fission yeast), this protein is Hydrolase C26A3.11.